A 361-amino-acid chain; its full sequence is ETS translocation variant 3-like protein (361 aa).

The ETS DNA-binding region spans 39–120; sequence IQLWHFILEL…KGKRFTYKFN (82 aa). The interval 178-201 is disordered; the sequence is LTGQQTPRGPPETSGDKKGSSSSV.

Belongs to the ETS family.

The protein localises to the nucleus. Functionally, transcriptional regulator. The protein is ETS translocation variant 3-like protein (ETV3L) of Homo sapiens (Human).